The sequence spans 87 residues: Kappa-5-bungarotoxin (87 aa).

The signal sequence occupies residues 1–21; that stretch reads MKTLLLTLVVVTIVCLDLGYT. 5 disulfide bridges follow: Cys-24–Cys-42, Cys-35–Cys-63, Cys-48–Cys-52, Cys-67–Cys-79, and Cys-80–Cys-85.

It belongs to the three-finger toxin family. Long-chain subfamily. Kappa-neurotoxin sub-subfamily. As to quaternary structure, homo- and heterodimer; non-covalently linked. In terms of tissue distribution, expressed by the venom gland.

The protein localises to the secreted. Functionally, postsynaptic neurotoxin that binds and inhibits neuronal nicotinic acetylcholine receptors (nAChR) with high affinity (IC(50)&lt;100 nM). Is a selective, and slowly reversible antagonist of alpha-3/CHRNA3-containing and some alpha-4/CHRNA4-containing AChRs. This is Kappa-5-bungarotoxin from Bungarus multicinctus (Many-banded krait).